A 412-amino-acid polypeptide reads, in one-letter code: O-acetyl-L-homoserine sulfhydrylase 2 (412 aa).

Lys-202 is modified (N6-(pyridoxal phosphate)lysine).

This sequence belongs to the trans-sulfuration enzymes family. In terms of assembly, homotetramer. Pyridoxal 5'-phosphate is required as a cofactor.

The enzyme catalyses O-acetyl-L-homoserine + hydrogen sulfide = L-homocysteine + acetate. Its activity is regulated as follows. Inhibited by the carbonyl reagents hydroxylamine and phenylhydrazine. Also inhibited by methionine and propargylglycine. Catalyzes the conversion of O-acetyl-L-homoserine (OAH) into homocysteine in the methionine biosynthesis pathway. Has weak activity with O-acetyl-L-serine, O-phospho-L-serine, L-serine, O-succinyl-L-homoserine and L-homoserine. Shows a very low CTT gamma-synthase activity. The sequence is that of O-acetyl-L-homoserine sulfhydrylase 2 from Thermus thermophilus (strain ATCC 27634 / DSM 579 / HB8).